Consider the following 517-residue polypeptide: Nuclear transcription factor Y subunit alpha (517 aa).

The span at 1–11 (MNQINYLTSER) shows a compositional bias: polar residues. 4 disordered regions span residues 1-95 (MNQI…MDIH), 121-183 (RIDY…NFNY), 252-281 (ESEN…RGCG), and 304-517 (AAAN…NNRS). Low complexity-rich tracts occupy residues 26-81 (NNSS…SSSS) and 126-183 (NNNN…NFNY). Residues 232–255 (YVNAKQYNRILKRRAARAKLESEN) carry the Subunit association domain (SAD) motif. The NFYA/HAP2-type DNA-binding region spans 262 to 287 (KAYQHESRHQHAIRRQRGCGGRFLTK). The segment covering 304–345 (AAANPNASSTSTTTSNITNNNNNNNNNNNTNNNNNNNNTNVN) has biased composition (low complexity). Residues 359 to 371 (SDDDIENDVENDS) are compositionally biased toward acidic residues. Composition is skewed to low complexity over residues 377-388 (KNNSNSPNQSSS) and 408-423 (NNNI…NNNN). Residues 438–447 (PLLNNGHIQA) are compositionally biased toward polar residues. Residues 448-517 (QQNQSPSSSP…PLSNFSNNRS (70 aa)) are compositionally biased toward low complexity.

It belongs to the NFYA/HAP2 subunit family. As to quaternary structure, heterotrimeric transcription factor composed of three components, nfyA, nfyB and nfyC. nfyB and nfyC must interact and dimerize for nfyA association and DNA binding.

The protein resides in the nucleus. Functionally, component of the NF-Y/HAP transcription factor complex. The NF-Y complex stimulates the transcription of various genes by recognizing and binding to a CCAAT motif in promoters. The sequence is that of Nuclear transcription factor Y subunit alpha (nfyA) from Dictyostelium discoideum (Social amoeba).